The primary structure comprises 326 residues: Regulation of nuclear pre-mRNA domain-containing protein 1B (326 aa).

Position 2 is an N-acetylserine (S2). Residues 2 to 133 (SSFSESALEK…QLKLSMEDSK (132 aa)) enclose the CID domain. Residues 128 to 144 (SMEDSKSPPPKAAEEKK) are compositionally biased toward basic and acidic residues. The tract at residues 128–148 (SMEDSKSPPPKAAEEKKSLKR) is disordered. Residues S132 and S134 each carry the phosphoserine modification. Phosphotyrosine is present on Y161. 2 positions are modified to phosphoserine: S166 and S299.

The protein belongs to the UPF0400 (RTT103) family. Homodimer. May form a heterodimer with RPRD1A. Associates with RPAP2. Associates with the RNA polymerase II complex. In terms of tissue distribution, widely expressed in the adult with highest levels in liver, colon, prostate and uterus and lowest levels in heart and kidney. Not detected in rectum.

Its subcellular location is the nucleus. Interacts with phosphorylated C-terminal heptapeptide repeat domain (CTD) of the largest RNA polymerase II subunit POLR2A, and participates in dephosphorylation of the CTD by RPAP2. Transcriptional regulator which enhances expression of CCND1. Promotes binding of RNA polymerase II to the CCDN1 promoter and to the termination region before the poly-A site but decreases its binding after the poly-A site. Prevents RNA polymerase II from reading through the 3' end termination site and may allow it to be recruited back to the promoter through promotion of the formation of a chromatin loop. Also enhances the transcription of a number of other cell cycle-related genes including CDK2, CDK4, CDK6 and cyclin-E but not CDKN1A, CDKN1B or cyclin-A. Promotes cell proliferation. This Mus musculus (Mouse) protein is Regulation of nuclear pre-mRNA domain-containing protein 1B (Rprd1b).